A 249-amino-acid polypeptide reads, in one-letter code: Metallo-beta-lactamase type 2 (249 aa).

An N-terminal signal peptide occupies residues 1-18 (MKTVFILISMLFPVAVMA). Residues histidine 99, histidine 101, aspartate 103, histidine 162, and cysteine 181 each contribute to the Zn(2+) site. Residues lysine 184 and asparagine 193 each coordinate substrate. A Zn(2+)-binding site is contributed by histidine 223.

This sequence belongs to the metallo-beta-lactamase superfamily. Class-B beta-lactamase family. In terms of assembly, monomer. Zn(2+) serves as cofactor.

The protein localises to the periplasm. It catalyses the reaction a beta-lactam + H2O = a substituted beta-amino acid. Its activity is regulated as follows. Competitively inhibited by 4-morpholineethanesulfonic acid (MES), SB236050 and biphenyl tetrazoles (BPTs). Also inhibited by chelating agents such as EDTA and 1,10-phenanthroline. CcrA is not susceptible to inactivation by the beta-lactamase-blocking agents clavulanic acid or tazobactam. Its function is as follows. Confers resistance to the different beta-lactams antibiotics (penicillin, cephalosporin and carbapenem) via the hydrolysis of the beta-lactam ring. The chain is Metallo-beta-lactamase type 2 from Bacteroides fragilis.